A 382-amino-acid polypeptide reads, in one-letter code: MKWLVLLGLVAFSECIVKIPLRRVKTMRNTLSGKKMLNSFLKEHAYRLSQISFRASNLTIHPLRNIMDMLYVGNITIGTPPQEFQVVFDTGSSDLLVPSINCLSPTKRPCSKQDKFKHHQSSTFRFTNDTFRIYFGSGTMRGFVAHDTVRIGDLVSTDQPFGLIFLESWLDIPFDGILGLNYPKISFSGAIPIFDKLKNEGAFSEPVFAFYLNKDKQEGSVVMFGGVDHRYYKGELNWVPLIHPGEWSIPLDRISMRRKVIACSGGCEALVGTGTSLILGPRTVVENIQKHIGATQQCFEYFVSCSAVYALPSIVFTINGINYPVPPQAYLVKDSRGQCYSPFQVNRANPSAENWILGDVFLRRYFSVFDRGNDRIGLARAV.

The signal sequence occupies residues 1–15 (MKWLVLLGLVAFSEC). A propeptide spans 16 to 53 (IVKIPLRRVKTMRNTLSGKKMLNSFLKEHAYRLSQISF) (activation peptide). 2 N-linked (GlcNAc...) asparagine glycosylation sites follow: Asn-57 and Asn-74. The Peptidase A1 domain maps to 71–379 (YVGNITIGTP…DRGNDRIGLA (309 aa)). Cys-102 and Cys-110 are oxidised to a cystine. N-linked (GlcNAc...) asparagine glycosylation occurs at Asn-128. 2 disulfides stabilise this stretch: Cys-263–Cys-267 and Cys-305–Cys-339.

The protein belongs to the peptidase A1 family. Trophoblast and placental tissue. Produced specifically in the invasive binucleate cells of the placenta.

It is found in the secreted. Its subcellular location is the extracellular space. Its function is as follows. Has no proteolytic activity. This chain is Pregnancy-associated glycoprotein 1, found in Ovis aries (Sheep).